The chain runs to 220 residues: GTP cyclohydrolase 1 (220 aa).

Zn(2+) contacts are provided by Cys110, His113, and Cys181.

This sequence belongs to the GTP cyclohydrolase I family. In terms of assembly, toroid-shaped homodecamer, composed of two pentamers of five dimers.

The catalysed reaction is GTP + H2O = 7,8-dihydroneopterin 3'-triphosphate + formate + H(+). The protein operates within cofactor biosynthesis; 7,8-dihydroneopterin triphosphate biosynthesis; 7,8-dihydroneopterin triphosphate from GTP: step 1/1. The sequence is that of GTP cyclohydrolase 1 from Baumannia cicadellinicola subsp. Homalodisca coagulata.